The sequence spans 369 residues: Histone deacetylase-like amidohydrolase (369 aa).

Histidine 143 functions as the Proton donor/acceptor in the catalytic mechanism. Zn(2+) contacts are provided by aspartate 180, histidine 182, and aspartate 268.

The protein belongs to the histone deacetylase family. As to quaternary structure, homotetramer; dimer of dimers. Zn(2+) serves as cofactor.

Its activity is regulated as follows. Zinc, and cobalt and nickel at a lesser extent, are able to increase the catalytic activity (2.2-, 1.3- and 1.1-fold respectively) at concentrations of 1 mM. Higher concentrations have an inhibitory effect. Magnesium, manganese and calcium have no effect on activity at concentrations between 0 and 10 mM. At 100 mM, the catalytic activity is increased between 1.2- and 2.1-fold. Hydroxamates like TSA and SAHA inhibit the enzyme. Is also inhibited by azobenzenes, stilbenes and arylazopyrazoles. Its function is as follows. Exhibits significant levels of protein deacetylase activity comparable to those of eukaryotic HDACs in assays both with fluorogenic peptidic substrates and acetate-radiolabeled histones. Accepts proteins with epsilon-acetylated lysine residues and tritiated-acetate-prelabeled chicken histones as substrates. The natural substrate protein is not yet known. This Alcaligenes sp. (strain DSM 11172) (Bordetella sp. (strain FB188)) protein is Histone deacetylase-like amidohydrolase (hdaH).